Reading from the N-terminus, the 165-residue chain is Large ribosomal subunit protein uL11 (165 aa).

This sequence belongs to the universal ribosomal protein uL11 family. In terms of assembly, part of the ribosomal stalk of the 50S ribosomal subunit. Interacts with L10 and the large rRNA to form the base of the stalk. L10 forms an elongated spine to which L12 dimers bind in a sequential fashion forming a multimeric L10(L12)X complex.

Forms part of the ribosomal stalk which helps the ribosome interact with GTP-bound translation factors. The protein is Large ribosomal subunit protein uL11 of Thermococcus kodakarensis (strain ATCC BAA-918 / JCM 12380 / KOD1) (Pyrococcus kodakaraensis (strain KOD1)).